Reading from the N-terminus, the 71-residue chain is MDIVKSIDTSVDAVLDEFDCAHFAVTLKVEFKTGKLLVCIGFGDTILEAKDKAYAKLGCSIIEEVNSHTVV.

This is Non-structural protein 3a from Canis lupus familiaris (Dog).